A 439-amino-acid polypeptide reads, in one-letter code: Packaging protein 1 (439 aa).

A compositionally biased stretch (polar residues) spans 1–23 (MSTQIPARQETYDPSQSSGTKTP). A disordered region spans residues 1-42 (MSTQIPARQETYDPSQSSGTKTPSHPYDGNPTRSYPKRNAGK). 151-158 (GPTGSGKS) contributes to the ATP binding site. Residues 419–439 (ERNPKLTDLEKLSPPGTFQET) are DNA-binding.

This sequence belongs to the adenoviridae packaging protein 1 family. As to quaternary structure, homodimer. Part of a genome packaging complex composed of packaging proteins 1, 2 and 3; this complex specifically binds to the packaging sequence on the left end of viral genomic DNA and performs packaging of the viral genome. Interacts with protein 33K.

It localises to the virion. It is found in the host nucleus. The protein localises to the host nucleoplasm. Its subcellular location is the host nucleolus. In terms of biological role, component of the packaging machinery which encapsidates the viral DNA into preformed capsids and transcriptional activator of the viral major late promoter (MLP). Binds, along with packaging proteins 2 and 3, to the specific packaging sequence on the left end of viral genomic DNA and displays ATPase activity thereby providing the power stroke of the packaging machinery. The activity of packaging protein IVa2 is stimulated by protein 33K which acts as a terminase. May be the protein that pumps DNA into the capsid powered by ATP hydrolysis. Specifically binds to the 5'-CG-3' nucleotides of the repeats making up the packaging sequence. Component of the DEF-A and DEF-B transcription factors that bind downstream elements of the major late promoter (MLP), and stimulate transcription from the MLP after initiation of viral DNA replication. DEF-A is a heterodimer packaging proteins 1 and 2 and DEF-B is a homodimer of packaging protein 1. In Fowl adenovirus A serotype 1 (strain CELO / Phelps) (FAdV-1), this protein is Packaging protein 1.